Consider the following 86-residue polypeptide: Exodeoxyribonuclease 7 small subunit (86 aa).

The interval 64 to 86 is disordered; it reads SNPETVQDKTDTDEPDSNEFSLT.

It belongs to the XseB family. Heterooligomer composed of large and small subunits.

The protein resides in the cytoplasm. The enzyme catalyses Exonucleolytic cleavage in either 5'- to 3'- or 3'- to 5'-direction to yield nucleoside 5'-phosphates.. In terms of biological role, bidirectionally degrades single-stranded DNA into large acid-insoluble oligonucleotides, which are then degraded further into small acid-soluble oligonucleotides. The chain is Exodeoxyribonuclease 7 small subunit from Akkermansia muciniphila (strain ATCC BAA-835 / DSM 22959 / JCM 33894 / BCRC 81048 / CCUG 64013 / CIP 107961 / Muc).